Here is a 620-residue protein sequence, read N- to C-terminus: Long-chain fatty acid transport protein 2 (620 aa).

The Lumenal portion of the chain corresponds to methionine 1–valine 4. A helical membrane pass occupies residues leucine 5–leucine 27. Topologically, residues glutamine 28–cysteine 106 are cytoplasmic. A helical transmembrane segment spans residues valine 107 to leucine 127. The Lumenal segment spans residues glycine 128–tyrosine 267. Tyrosine 222–lysine 233 contacts AMP. A helical membrane pass occupies residues histidine 268–leucine 288. Residues arginine 289 to leucine 620 are Cytoplasmic-facing. N6-acetyllysine is present on lysine 291. Threonine 577 carries the phosphothreonine modification.

This sequence belongs to the ATP-dependent AMP-binding enzyme family. In terms of tissue distribution, liver and kidney (at protein level).

The protein localises to the endoplasmic reticulum membrane. The protein resides in the peroxisome membrane. Its subcellular location is the cell membrane. It localises to the microsome. It carries out the reaction a fatty acid(in) = a fatty acid(out). The catalysed reaction is (9Z)-octadecenoate(out) = (9Z)-octadecenoate(in). The enzyme catalyses a long-chain fatty acid + ATP + CoA = a long-chain fatty acyl-CoA + AMP + diphosphate. It catalyses the reaction (5Z,8Z,11Z,14Z)-eicosatetraenoate + ATP + CoA = (5Z,8Z,11Z,14Z)-eicosatetraenoyl-CoA + AMP + diphosphate. It carries out the reaction (9Z,12Z,15Z)-octadecatrienoate + ATP + CoA = (9Z,12Z,15Z)-octadecatrienoyl-CoA + AMP + diphosphate. The catalysed reaction is hexadecanoate + ATP + CoA = hexadecanoyl-CoA + AMP + diphosphate. The enzyme catalyses (9Z)-octadecenoate + ATP + CoA = (9Z)-octadecenoyl-CoA + AMP + diphosphate. It catalyses the reaction 2,6,10,14-tetramethylpentadecanoate + ATP + CoA = pristanoyl-CoA + AMP + diphosphate. It carries out the reaction (E)-hexadec-2-enoate + ATP + CoA = (2E)-hexadecenoyl-CoA + AMP + diphosphate. The catalysed reaction is 3,7,11,15-tetramethylhexadecanoate + ATP + CoA = phytanoyl-CoA + AMP + diphosphate. The enzyme catalyses a very long-chain fatty acid + ATP + CoA = a very long-chain fatty acyl-CoA + AMP + diphosphate. It catalyses the reaction tetracosanoate + ATP + CoA = tetracosanoyl-CoA + AMP + diphosphate. It carries out the reaction (4Z,7Z,10Z,13Z,16Z,19Z)-docosahexaenoate + ATP + CoA = (4Z,7Z,10Z,13Z,16Z,19Z)-docosahexaenoyl-CoA + AMP + diphosphate. The catalysed reaction is (25R)-3alpha,7alpha,12alpha-trihydroxy-5beta-cholestan-26-oate + ATP + CoA = (25R)-3alpha,7alpha,12alpha-trihydroxy-5beta-cholestan-26-oyl-CoA + AMP + diphosphate. Functionally, mediates the import of long-chain fatty acids (LCFA) into the cell by facilitating their transport across cell membranes, playing an important role in hepatic fatty acid uptake. Also functions as an acyl-CoA ligase catalyzing the ATP-dependent formation of fatty acyl-CoA using LCFA and very-long-chain fatty acids (VLCFA) as substrates, which prevents fatty acid efflux from cells and might drive more fatty acid uptake. Plays a pivotal role in regulating available LCFA substrates from exogenous sources in tissues undergoing high levels of beta-oxidation or triglyceride synthesis. Can also activate branched-chain fatty acids such as phytanic acid and pristanic acid. May contribute to the synthesis of sphingosine-1-phosphate. Does not activate C24 bile acids, cholate and chenodeoxycholate. In vitro, activates 3-alpha,7-alpha,12-alpha-trihydroxy-5-beta-cholestanate (THCA), the C27 precursor of cholic acid deriving from the de novo synthesis from cholesterol. However, it is not critical for THCA activation and bile synthesis in vivo. The protein is Long-chain fatty acid transport protein 2 (Slc27a2) of Rattus norvegicus (Rat).